Here is an 86-residue protein sequence, read N- to C-terminus: Antimicrobial peptide 2 (86 aa).

The first 25 residues, 1–25, serve as a signal peptide directing secretion; that stretch reads MVNMKCVALIVIVMMAFMMVDPSMG. Intrachain disulfides connect Cys29/Cys40, Cys34/Cys46, and Cys39/Cys53. In terms of domain architecture, Chitin-binding type-1 spans 29-53; sequence CVRGRCPSGMCCSQFGYCGKGPKYC. A propeptide spans 56–86 (removed in mature form); that stretch reads ASTTVDHQADVAATKTAKNPTDAKLAGAGSP.

In terms of assembly, homodimer.

Its function is as follows. Chitin-binding protein with a defensive function against numerous chitin containing fungal pathogens. It is also a potent inhibitor of Gram-positive bacteria. This Amaranthus caudatus (Love-lies-bleeding) protein is Antimicrobial peptide 2.